We begin with the raw amino-acid sequence, 306 residues long: Immune protein Tsi7 (306 aa).

Interacts with Tse7.

Immunity protein that plays a role in preventing early activation of toxin Tse7. Protects thereby cells from Tse7 DNase activity. The chain is Immune protein Tsi7 from Pseudomonas aeruginosa (strain ATCC 15692 / DSM 22644 / CIP 104116 / JCM 14847 / LMG 12228 / 1C / PRS 101 / PAO1).